The chain runs to 56 residues: MAVEEIVKVSRNYQVTIPAKVRQKFQIKEGDLVKVTFDESGGVVKIQLLDSKTDAH.

The 48-residue stretch at 4–51 (EEIVKVSRNYQVTIPAKVRQKFQIKEGDLVKVTFDESGGVVKIQLLDS) folds into the SpoVT-AbrB domain.

The polypeptide is Repressor-like protein SSo7c4 (Saccharolobus solfataricus (strain ATCC 35092 / DSM 1617 / JCM 11322 / P2) (Sulfolobus solfataricus)).